The chain runs to 513 residues: GMP synthase [glutamine-hydrolyzing] (513 aa).

The Glutamine amidotransferase type-1 domain maps to Leu7–Asp198. The active-site Nucleophile is the Cys84. Active-site residues include His172 and Glu174. Positions Trp199 to Arg388 constitute a GMPS ATP-PPase domain. Residue Ser226–Ser232 participates in ATP binding.

As to quaternary structure, homodimer.

The catalysed reaction is XMP + L-glutamine + ATP + H2O = GMP + L-glutamate + AMP + diphosphate + 2 H(+). It functions in the pathway purine metabolism; GMP biosynthesis; GMP from XMP (L-Gln route): step 1/1. In terms of biological role, catalyzes the synthesis of GMP from XMP. The polypeptide is GMP synthase [glutamine-hydrolyzing] (Symbiobacterium thermophilum (strain DSM 24528 / JCM 14929 / IAM 14863 / T)).